Consider the following 223-residue polypeptide: Phosphoribosylformylglycinamidine synthase subunit PurQ (223 aa).

Residues 3–223 (FAVLVFPGSN…MVKSWREQHV (221 aa)) form the Glutamine amidotransferase type-1 domain. The active-site Nucleophile is the cysteine 85. Active-site residues include histidine 193 and glutamate 195.

In terms of assembly, part of the FGAM synthase complex composed of 1 PurL, 1 PurQ and 2 PurS subunits.

It localises to the cytoplasm. It catalyses the reaction N(2)-formyl-N(1)-(5-phospho-beta-D-ribosyl)glycinamide + L-glutamine + ATP + H2O = 2-formamido-N(1)-(5-O-phospho-beta-D-ribosyl)acetamidine + L-glutamate + ADP + phosphate + H(+). The catalysed reaction is L-glutamine + H2O = L-glutamate + NH4(+). The protein operates within purine metabolism; IMP biosynthesis via de novo pathway; 5-amino-1-(5-phospho-D-ribosyl)imidazole from N(2)-formyl-N(1)-(5-phospho-D-ribosyl)glycinamide: step 1/2. Its function is as follows. Part of the phosphoribosylformylglycinamidine synthase complex involved in the purines biosynthetic pathway. Catalyzes the ATP-dependent conversion of formylglycinamide ribonucleotide (FGAR) and glutamine to yield formylglycinamidine ribonucleotide (FGAM) and glutamate. The FGAM synthase complex is composed of three subunits. PurQ produces an ammonia molecule by converting glutamine to glutamate. PurL transfers the ammonia molecule to FGAR to form FGAM in an ATP-dependent manner. PurS interacts with PurQ and PurL and is thought to assist in the transfer of the ammonia molecule from PurQ to PurL. This Staphylococcus aureus (strain MRSA252) protein is Phosphoribosylformylglycinamidine synthase subunit PurQ.